Reading from the N-terminus, the 132-residue chain is U10-hexatoxin-Hi1a (132 aa).

Positions 1 to 20 are cleaved as a signal peptide; that stretch reads MKGFIVFSLSLCLVFTVCLA. Residues 21–30 constitute a propeptide that is removed on maturation; the sequence is EDELMKEAVR.

Post-translationally, contains 5 disulfide bonds. As to expression, expressed by the venom gland.

The protein resides in the secreted. Its function is as follows. Probable ion channel inhibitor. In Hadronyche infensa (Fraser island funnel-web spider), this protein is U10-hexatoxin-Hi1a.